The primary structure comprises 369 residues: Maltose/maltodextrin import ATP-binding protein MalK (369 aa).

Residues 4–234 (VTLSSVYKAF…PANRFVAGFI (231 aa)) form the ABC transporter domain. Residue 36-43 (GPSGCGKS) participates in ATP binding.

It belongs to the ABC transporter superfamily. Maltooligosaccharide importer (TC 3.A.1.1.1) family. In terms of assembly, the complex is composed of two ATP-binding proteins (MalK), two transmembrane proteins (MalG and MalK) and a solute-binding protein (MalE).

The protein resides in the cell inner membrane. It carries out the reaction D-maltose(out) + ATP + H2O = D-maltose(in) + ADP + phosphate + H(+). Its function is as follows. Part of the ABC transporter complex MalEFGK involved in maltose/maltodextrin import. Responsible for energy coupling to the transport system. This Yersinia pestis bv. Antiqua (strain Antiqua) protein is Maltose/maltodextrin import ATP-binding protein MalK.